We begin with the raw amino-acid sequence, 258 residues long: Tryptophan synthase alpha chain (258 aa).

Catalysis depends on proton acceptor residues Glu-52 and Asp-63.

It belongs to the TrpA family. Tetramer of two alpha and two beta chains.

It catalyses the reaction (1S,2R)-1-C-(indol-3-yl)glycerol 3-phosphate + L-serine = D-glyceraldehyde 3-phosphate + L-tryptophan + H2O. It functions in the pathway amino-acid biosynthesis; L-tryptophan biosynthesis; L-tryptophan from chorismate: step 5/5. In terms of biological role, the alpha subunit is responsible for the aldol cleavage of indoleglycerol phosphate to indole and glyceraldehyde 3-phosphate. This Streptococcus pneumoniae (strain P1031) protein is Tryptophan synthase alpha chain.